The chain runs to 72 residues: Translation initiation factor IF-1 (72 aa).

Positions 1–72 constitute an S1-like domain; that stretch reads MAKEEPIEVE…TRGRIIYRTK (72 aa).

The protein belongs to the IF-1 family. As to quaternary structure, component of the 30S ribosomal translation pre-initiation complex which assembles on the 30S ribosome in the order IF-2 and IF-3, IF-1 and N-formylmethionyl-tRNA(fMet); mRNA recruitment can occur at any time during PIC assembly.

It localises to the cytoplasm. In terms of biological role, one of the essential components for the initiation of protein synthesis. Stabilizes the binding of IF-2 and IF-3 on the 30S subunit to which N-formylmethionyl-tRNA(fMet) subsequently binds. Helps modulate mRNA selection, yielding the 30S pre-initiation complex (PIC). Upon addition of the 50S ribosomal subunit IF-1, IF-2 and IF-3 are released leaving the mature 70S translation initiation complex. This Syntrophus aciditrophicus (strain SB) protein is Translation initiation factor IF-1.